Consider the following 3660-residue polypeptide: Dystrophin (3660 aa).

The actin-binding stretch occupies residues 1-244; the sequence is MSAHVLWYEE…YVTSLFQVLP (244 aa). Calponin-homology (CH) domains are found at residues 19-123 and 138-244; these read DVQK…LHWQ and TNSE…QVLP. 22 Spectrin repeats span residues 341-449, 450-558, 561-669, 721-830, 832-936, 945-1047, 1050-1156, 1159-1265, 1268-1369, 1470-1570, 1573-1678, 1681-1782, 1879-1981, 2013-2103, 2106-2211, 2214-2321, 2472-2574, 2577-2683, 2686-2799, 2802-2904, 2906-2928, and 2931-3037; these read MDLD…NLHK, ILMD…LLQD, RKWQ…QVSQ, EIRK…WLEY, NSII…QLQT, RYKD…KLED, TKLQ…ALKG, DKTV…TLEE, ACWH…SLEQ, EQRL…ELEK, KLSR…LLME, KHME…FIPL, HQWY…TVLE, LSEV…RFDK, EKWR…RIEE, NILS…EIEI, FNKA…QLHE, KDST…ALES, LMLQ…HLEA, DQWK…LRRQ, DDVRTEWDKLNLRSADWQKKIDD, and ERLQ…QLHE. Residues 3052–3085 enclose the WW domain; that stretch reads TSVQGPWERAISPNKVPYYINHETQTTCWDHPKM. Residues 3305-3361 form a ZZ-type; degenerate zinc finger; the sequence is KHQAKCNICKECPIIGFRYRSLKHFNYDICQSCFFSGRVAKGHKMHYPMVEYCTPTT. Zn(2+) contacts are provided by Cys3310, Cys3313, Cys3334, and Cys3337. Disordered regions lie at residues 3503-3526 and 3575-3660; these read KQQHDHKGLSPLPSPPEMMPVSPQ and PQAD…EATM. Polar residues-rich tracts occupy residues 3582–3601 and 3637–3647; these read NGTTLSSPSTSLQRSDSSQP and QLNNSFPSSRG.

The protein localises to the cell membrane. The protein resides in the sarcolemma. It is found in the cytoplasm. It localises to the cytoskeleton. Its subcellular location is the postsynaptic cell membrane. Its function is as follows. May play a role in anchoring the cytoskeleton to the plasma membrane. This chain is Dystrophin (DMD), found in Gallus gallus (Chicken).